Consider the following 180-residue polypeptide: Protein YOP1 (180 aa).

Topologically, residues 1–35 are cytoplasmic; that stretch reads MADYLKLFQDSLKGLDTKFAGNQILSRIEAQTKLP. Residues 36–55 form a helical membrane-spanning segment; the sequence is RSYVIVGLVAVYFLLIFINV. At 56–57 the chain is on the lumenal side; it reads GG. The helical transmembrane segment at 58-78 threads the bilayer; the sequence is IGEILSNFVGFCIPTYYSLKA. The Cytoplasmic portion of the chain corresponds to 79–88; sequence LKTATSTDDT. Residues 89 to 105 traverse the membrane as a helical segment; it reads QLLTYWIVFSFLSVIEF. Residues 106–108 lie on the Lumenal side of the membrane; it reads WSK. The helical transmembrane segment at 109–127 threads the bilayer; the sequence is AILYWVPFYWFFKTVFLLY. Topologically, residues 128-180 are cytoplasmic; the sequence is IAIPSFGGAQLVYTRLISPFSDKYLPIVEGKSGELAQKVEAAANNAKASGYSR.

It belongs to the DP1 family. Oligomer.

It is found in the endoplasmic reticulum membrane. The protein localises to the golgi apparatus membrane. In terms of biological role, required to generate and maintain the structure of the tubular endoplasmic reticulum network and the vacuole. Induces high curvature in membranes and causes membrane tubule formation. Involved in membrane/vesicle trafficking. The polypeptide is Protein YOP1 (YOP1) (Kluyveromyces lactis (strain ATCC 8585 / CBS 2359 / DSM 70799 / NBRC 1267 / NRRL Y-1140 / WM37) (Yeast)).